The primary structure comprises 818 residues: MESEQLFHRGYYRNSYNSITSASSDEELLDGAGAIMDFQTSEDDNLLDGDTAAGTHYTMTNGGSINSSTHLLDLLDEPIPGVGTYDDFHTIDWVREKCKDRERHRRINSKKKESAWEMTKSLYDAWSGWLVVTLTGLASGALAGLIDIAADWMTDLKEGICLSALWYNHEQCCWGSNETTFEERDKCPQWKTWAELIIGQAEGPGSYIMNYIMYIFWALSFAFLAVSLVKVFAPYACGSGIPEIKTILSGFIIRGYLGKWTLMIKTITLVLAVASGLSLGKEGPLVHVACCCGNIFSYLFPKYSTNEAKKREVLSAASAAGVSVAFGAPIGGVLFSLEEVSYYFPLKTLWRSFFAALVAAFVLRSINPFGNSRLVLFYVEYHTPWYLFELFPFILLGVFGGLWGAFFIRANIAWCRRRKSTKFGKYPVLEVIIVAAITAVIAFPNPYTRLNTSELIKELFTDCGPLESSSLCDYRNDMNASKIVDDIPDRPAGVGVYSAIWQLCLALIFKIIMTVFTFGIKVPSGLFIPSMAIGAIAGRIVGIAVEQLAYYHHDWFIFKEWCEVGADCITPGLYAMVGAAACLGGVTRMTVSLVVIVFELTGGLEYIVPLMAAVMTSKWVGDAFGREGIYEAHIRLNGYPFLDAKEEFTHTTLAADVMRPRRSDPPLAVLTQDNMTVDDIENMINETSYNGFPVIMSKESQRLVGFALRRDLTIAIESARKKQEGVVGSSRVCFAQHTPSLPAESPRPLKLRSILDMSPFTVTDHTPMEIVVDIFRKLGLRQCLVTHNGRLLGIITKKDILRHMAQTANQDPASIMFN.

At 1–125 (MESEQLFHRG…WEMTKSLYDA (125 aa)) the chain is on the cytoplasmic side. 3 short sequence motifs (di-leucine internalization motif; mediates targeting to late endosome and lysosome membranes) span residues 28–29 (LL), 46–47 (LL), and 71–75 (LLDLL). Residues 126–163 (WSGWLVVTLTGLASGALAGLIDIAADWMTDLKEGICLS) traverse the membrane as a helical segment. The N-linked (GlcNAc...) asparagine glycan is linked to Asn-177. A helical membrane pass occupies residues 209–232 (MNYIMYIFWALSFAFLAVSLVKVF). Positions 238–242 (GSGIP) match the Selectivity filter part_1 motif. Ser-239 serves as a coordination point for chloride. The segment at residues 241 to 248 (IPEIKTIL) is an intramembrane region (helical). 2 consecutive transmembrane segments (helical) span residues 258-276 (GKWT…VASG) and 282-301 (EGPL…YLFP). The Selectivity filter part_2 signature appears at 280–284 (GKEGP). 2 consecutive intramembrane regions (helical) follow at residues 313 to 325 (VLSA…VSVA) and 329 to 337 (PIGGVLFSL). The next 3 membrane-spanning stretches (helical) occupy residues 349-367 (LWRS…RSIN), 391-416 (FPFI…AWCR), and 423-443 (FGKY…VIAF). N-linked (GlcNAc...) asparagine glycosylation is found at Asn-451 and Asn-479. A run of 2 helical transmembrane segments spans residues 500–520 (IWQL…TFGI) and 525–544 (GLFI…VGIA). Residues 525–529 (GLFIP) carry the Selectivity filter part_3 motif. Phe-527 is a binding site for chloride. 2 consecutive intramembrane regions (helical) follow at residues 572-586 (GLYA…LGGV) and 590-601 (TVSLVVIVFELT). The note=Loop between two helices intramembrane region spans 602-605 (GGLE). The chain crosses the membrane as a helical span at residues 606 to 624 (YIVPLMAAVMTSKWVGDAF). Over 625-818 (GREGIYEAHI…NQDPASIMFN (194 aa)) the chain is Cytoplasmic. Tyr-630 provides a ligand contact to chloride. CBS domains are found at residues 658–722 (MRPR…ARKK) and 755–812 (LDMS…NQDP). ATP is bound by residues 689 to 691 (YNG) and 796 to 799 (TKKD).

The protein belongs to the chloride channel (TC 2.A.49) family. ClC-3/CLCN3 subfamily. In terms of assembly, monomer and homodimer. Forms heterodimers with CLCN4. In terms of processing, N-glycosylated. As to expression, abundant in brain, especially in the olfactory bulb, hippocampus, and cerebellum. A moderate expression is seen in the lung, kidney and adrenal gland.

The protein localises to the lysosome membrane. The protein resides in the late endosome membrane. It localises to the cell membrane. It is found in the early endosome membrane. Its function is as follows. Strongly outwardly rectifying, electrogenic H(+)/Cl(-)exchanger which mediates the exchange of chloride ions against protons. The CLC channel family contains both chloride channels and proton-coupled anion transporters that exchange chloride or another anion for protons. The presence of conserved gating glutamate residues is typical for family members that function as antiporters. Strongly outwardly rectifying, electrogenic H(+)/Cl(-)exchanger which mediates the exchange of chloride ions against protons. May play an important role in neuronal cell function through regulation of membrane excitability by protein kinase C. It could help neuronal cells to establish short-term memory. The sequence is that of H(+)/Cl(-) exchange transporter 3 (Clcn3) from Rattus norvegicus (Rat).